A 419-amino-acid polypeptide reads, in one-letter code: Putative zinc metalloprotease spyM18_2031 (419 aa).

Histidine 18 lines the Zn(2+) pocket. Glutamate 19 is an active-site residue. Histidine 22 contacts Zn(2+). 4 helical membrane-spanning segments follow: residues 169-191 (LITN…ILLV), 301-323 (LAWS…FSLN), 343-365 (LESV…LIPI), and 392-411 (AYIT…AVTW). Residues 175–274 (GPMNNFILGI…LKTVAVKPQK (100 aa)) form the PDZ domain.

Belongs to the peptidase M50B family. Zn(2+) is required as a cofactor.

It localises to the cell membrane. The protein is Putative zinc metalloprotease spyM18_2031 of Streptococcus pyogenes serotype M18 (strain MGAS8232).